Here is a 76-residue protein sequence, read N- to C-terminus: Small ribosomal subunit protein bS18 (76 aa).

It belongs to the bacterial ribosomal protein bS18 family. In terms of assembly, part of the 30S ribosomal subunit. Forms a tight heterodimer with protein bS6.

Functionally, binds as a heterodimer with protein bS6 to the central domain of the 16S rRNA, where it helps stabilize the platform of the 30S subunit. The protein is Small ribosomal subunit protein bS18 of Pseudomonas entomophila (strain L48).